The chain runs to 757 residues: DNA endonuclease RBBP8 (757 aa).

An essential for binding to the MRN complex and for RPA focus formation on DNA damage region spans residues 22–45 (DLWTKLKEYHDKETQGLQVKVTKL). Residues 35-84 (TQGLQVKVTKLKKERILDAQRLEEFFTKNQQLREQQKVLHETIKVLEDRL) adopt a coiled-coil conformation. The segment at 45–160 (LKKERILDAQ…TDLESEEDVI (116 aa)) is required for interaction with LMO4, probably by stabilizing the interaction through RPPB8 dimerization. Glycyl lysine isopeptide (Lys-Gly) (interchain with G-Cter in SUMO2) cross-links involve residues lysine 62 and lysine 115. Residues 117–138 (ITELMNEKNTLQEENKKLSEQL) adopt a coiled-coil conformation. Residue lysine 193 forms a Glycyl lysine isopeptide (Lys-Gly) (interchain with G-Cter in SUMO2) linkage. The residue at position 272 (serine 272) is a Phosphoserine. Phosphothreonine is present on threonine 309. Phosphoserine occurs at positions 320, 321, and 343. The tract at residues 348 to 375 (GKKTHLKTVPLSNTSAPGPEKPRSKSED) is disordered. Residues lysine 354 and lysine 372 each participate in a glycyl lysine isopeptide (Lys-Gly) (interchain with G-Cter in SUMO2) cross-link. Residue serine 373 is modified to Phosphoserine. Glycyl lysine isopeptide (Lys-Gly) (interchain with G-Cter in SUMO2) cross-links involve residues lysine 390, lysine 399, and lysine 405. Residues 407–417 (TSEPISEQGNI) are compositionally biased toward polar residues. The tract at residues 407 to 430 (TSEPISEQGNIGHSKDTDRDKHVV) is disordered. The segment covering 419–429 (HSKDTDRDKHV) has biased composition (basic and acidic residues). Residues lysine 433 and lysine 443 each participate in a glycyl lysine isopeptide (Lys-Gly) (interchain with G-Cter in SUMO2) cross-link. Residues 484-488 (PLDLS) form a PXDLS motif region. The PXDLS motif motif lies at 484 to 488 (PLDLS). The tract at residues 503–551 (CENSKIRFRQVTLYEALKPIPRDSSSSRKALSGSCGLTKDSPEEPCLQE) is damage-recruitment motif. Lysine 520 participates in a covalent cross-link: Glycyl lysine isopeptide (Lys-Gly) (interchain with G-Cter in SUMO2); alternate. The segment at 524-544 (RDSSSSRKALSGSCGLTKDSP) is disordered. Glycyl lysine isopeptide (Lys-Gly) (interchain with G-Cter in SUMO2) cross-links involve residues lysine 564 and lysine 570. Residue lysine 596 forms a Glycyl lysine isopeptide (Lys-Gly) (interchain with G-Cter in SUMO2); alternate linkage. Residues lysine 605, lysine 630, and lysine 632 each participate in a glycyl lysine isopeptide (Lys-Gly) (interchain with G-Cter in SUMO2) cross-link. Residues 633–677 (SLQNNQDVSFENIQWSIDPGADLSQYKMGVTVDDTKDGSQSRLAG) are required for interaction with LMO4, probably by making physical contact with LMO4. Serine 656 bears the Phosphoserine; by ATM mark. Residue lysine 668 forms a Glycyl lysine isopeptide (Lys-Gly) (interchain with G-Cter in SUMO2) linkage. Serine 671 carries the phosphoserine modification. The segment covering 696–728 (KKQEQKGEESPNGERKMNDSLEDMFDRTTHEEY) has biased composition (basic and acidic residues). The tract at residues 696 to 757 (KKQEQKGEES…TTTKKPNISW (62 aa)) is disordered. Residue lysine 711 forms a Glycyl lysine isopeptide (Lys-Gly) (interchain with G-Cter in SUMO2) linkage. Phosphoserine is present on serine 715. The span at 747–757 (STTTKKPNISW) shows a compositional bias: polar residues.

This sequence belongs to the COM1/SAE2/CtIP family. Homotetramer; formed by antiparallel association of helical extensions protruding from the N-termini of two parallel coiled-coil dimers. Forms a dumbbell-shaped particle in which polar globular domains are held about 30 nm apart by a central rod. Homotetramerization is required for DNA-end resection and repair. Interacts (via the PXDLS motif) with CTBP1; the interaction is disrupted via binding of the adenovirus E1A to CTBP1. Component of the BRCA1-RBBP8 complex. Interacts (the Ser-321 phosphorylated form) with BRCA1 (via the C-terminal BRCT domains): the interaction occurs in the G2 phase, ubiquitinates RBBP8 and involves RBBP8 in BRCA1-dependent G2/M checkpoint control on DNA damage. Interacts with RB1. Interacts with the MRN complex. Interacts directly with MRE11; the interaction is required for efficient homologous recombination (HR) and regulation of the MRN complex. Interacts directly with RAD50. Interacts (when phosphorylated by CDK1) with NBN; promoting association with the MRN complex. Interacts with LMO4 (via the LIM zinc-binding 1 domain). Interacts with SIAH1. Interacts with RNF138. Interacts with EXD2. Interacts with CUL3 and KLHL15; this interaction leads to RBBP8 proteasomal degradation. Directly interacts with PIN1; this interaction depends upon RBBP8 phosphorylation, predominantly at Thr-309. Interacts with FZR1; this interaction leads to APC/C-mediated RBBP8 proteasomal degradation. Interacts with AUNIP; leading to recruit RBBP8 to sites of DNA damage. Interacts with SAMHD1. Interacts with HDGFL2. Post-translationally, hyperphosphorylation upon ionizing radiation results in dissociation from BRCA1. Phosphorylation by CDK1 is essential for the recruitment to DNA and the DNA repair function. Phosphorylated on Ser-321 as cells enter G2 phase. This phosphorylation is required for binding BRCA1 and for the G2/M DNA damage transition checkpoint control. Phosphorylation at Thr-309, probably catalyzed by CDK2, is required for PIN1-binding, while phosphorylation at Ser-272 serves as a PIN1 isomerization site. Phosphorylation at Thr-309 is cell-cycle dependent. It steadily increases during S phase, peaks at late S/G2 phase, and drops at G1. Phosphorylation is not required for tetramerization. Binds to DNA more strongly when dephosphorylated. Ubiquitinated. Ubiquitination at multiple sites by BRCA1 (via its N-terminal RING domain) does not lead to its proteasomal degradation but instead the ubiquitinated RBBP8 binds to chromatin following DNA damage and may play a role in G2/M checkpoint control. Ubiquitinated by RNF138 at its N-terminus. Ubiquitinated through 'Lys-48' by the E3 CUL3-KLHL15 complex; this modification leads to proteasomal degradation. Ubiquitinated by the E3 FZR1/APC/C complex; this modification leads to proteasomal degradation.

It localises to the nucleus. The protein localises to the chromosome. Functionally, endonuclease that cooperates with the MRE11-RAD50-NBN (MRN) complex in DNA-end resection, the first step of double-strand break (DSB) repair through the homologous recombination (HR) pathway. HR is restricted to S and G2 phases of the cell cycle and preferentially repairs DSBs resulting from replication fork collapse. Key determinant of DSB repair pathway choice, as it commits cells to HR by preventing classical non-homologous end-joining (NHEJ). Specifically promotes the endonuclease activity of the MRN complex to clear DNA ends containing protein adducts: recruited to DSBs by NBN following phosphorylation by CDK1, and promotes the endonuclease activity of MRE11 to clear protein-DNA adducts and generate clean double-strand break ends. Functions downstream of the MRN complex and ATM, promotes ATR activation and its recruitment to DSBs in the S/G2 phase facilitating the generation of ssDNA. Component of the BRCA1-RBBP8 complex that regulates CHEK1 activation and controls cell cycle G2/M checkpoints on DNA damage. During immunoglobulin heavy chain class-switch recombination, promotes microhomology-mediated alternative end joining (A-NHEJ) and plays an essential role in chromosomal translocations. Binds preferentially to DNA Y-junctions and to DNA substrates with blocked ends and promotes intermolecular DNA bridging. The chain is DNA endonuclease RBBP8 (RBBP8) from Bos taurus (Bovine).